Here is a 343-residue protein sequence, read N- to C-terminus: Dihydroorotase (343 aa).

Positions 13 and 15 each coordinate Zn(2+). Substrate is bound by residues 15 to 17 (HLR) and N41. Zn(2+) is bound by residues K99, H136, and H174. K99 is subject to N6-carboxylysine. Position 136 (H136) interacts with substrate. Residue L219 coordinates substrate. D247 is a binding site for Zn(2+). D247 is an active-site residue. Positions 251 and 263 each coordinate substrate.

The protein belongs to the metallo-dependent hydrolases superfamily. DHOase family. Class II DHOase subfamily. Homodimer. Requires Zn(2+) as cofactor.

The enzyme catalyses (S)-dihydroorotate + H2O = N-carbamoyl-L-aspartate + H(+). Its pathway is pyrimidine metabolism; UMP biosynthesis via de novo pathway; (S)-dihydroorotate from bicarbonate: step 3/3. In terms of biological role, catalyzes the reversible cyclization of carbamoyl aspartate to dihydroorotate. The chain is Dihydroorotase from Shewanella baltica (strain OS155 / ATCC BAA-1091).